Consider the following 390-residue polypeptide: Alkanesulfonate monooxygenase (390 aa).

Belongs to the SsuD family.

It catalyses the reaction an alkanesulfonate + FMNH2 + O2 = an aldehyde + FMN + sulfite + H2O + 2 H(+). In terms of biological role, catalyzes the desulfonation of aliphatic sulfonates. The protein is Alkanesulfonate monooxygenase of Cupriavidus taiwanensis (strain DSM 17343 / BCRC 17206 / CCUG 44338 / CIP 107171 / LMG 19424 / R1) (Ralstonia taiwanensis (strain LMG 19424)).